A 321-amino-acid polypeptide reads, in one-letter code: NADH-ubiquinone oxidoreductase chain 1 (321 aa).

Transmembrane regions (helical) follow at residues 6–26 (IVPP…LTAL), 67–87 (LLAT…LALA), 103–123 (LGLL…LWSG), 143–163 (ISYE…SGGF), 174–194 (PLYL…STLA), 220–240 (ASPF…MNTL), 256–276 (ALFT…FLWV), and 296–316 (FLPM…SMFG).

Belongs to the complex I subunit 1 family.

It is found in the mitochondrion inner membrane. The enzyme catalyses a ubiquinone + NADH + 5 H(+)(in) = a ubiquinol + NAD(+) + 4 H(+)(out). Functionally, core subunit of the mitochondrial membrane respiratory chain NADH dehydrogenase (Complex I) that is believed to belong to the minimal assembly required for catalysis. Complex I functions in the transfer of electrons from NADH to the respiratory chain. The immediate electron acceptor for the enzyme is believed to be ubiquinone. This Alligator mississippiensis (American alligator) protein is NADH-ubiquinone oxidoreductase chain 1 (MT-ND1).